The primary structure comprises 982 residues: E3 ubiquitin-protein ligase CBL-B (982 aa).

Residues 35–167 (PPKQAAADRR…KAIFPNGQFQ (133 aa)) are 4H. A Cbl-PTB domain is found at 35–343 (PPKQAAADRR…GRSYNPDLTG (309 aa)). The EF-hand-like stretch occupies residues 168 to 240 (GDNFRITKAD…FEFDIFTRLF (73 aa)). Residues aspartate 221, threonine 223, asparagine 225, tyrosine 227, and glutamate 232 each contribute to the Ca(2+) site. Residues 241-343 (QPWGSILRNW…GRSYNPDLTG (103 aa)) are SH2-like. Position 282 is a phosphoserine; by PKC/PRKCQ (serine 282). A 4-O-phospho-L-tyrosine-binding site is contributed by arginine 286. The linker stretch occupies residues 344-372 (LCEPTPHDHIKVTQEQYELYCEMGSTFQL). Phosphotyrosine is present on tyrosine 363. Residues 373–412 (CKICAENDKDVKIEPCGHLMCTSCLTAWQESDGQGCPFCR) form an RING-type zinc finger. Positions 466–571 (NVRKCTDRQN…PPPIPPDNRL (106 aa)) are disordered. Residues 473–486 (RQNSPVTSPGSSPL) show a composition bias toward polar residues. Phosphoserine occurs at positions 476, 480, 484, 521, 525, and 529. An interaction with VAV1 region spans residues 543 to 568 (PLPAPPPPLRDPPPPPPERPPPIPPD). Residues 544-567 (LPAPPPPLRDPPPPPPERPPPIPP) show a composition bias toward pro residues. Serine 634 bears the Phosphoserine mark. Phosphotyrosine occurs at positions 665 and 709. Disordered stretches follow at residues 688 to 731 (GPLA…NVKP) and 769 to 929 (FDSA…EAAL). The span at 715-725 (HPVSLNSQPSH) shows a compositional bias: polar residues. Pro residues predominate over residues 819-828 (PSLPPPPPPA). Low complexity predominate over residues 838-848 (PPGSSSRPSSG). Residues 880–899 (VKTNRTSQDYDQLPSCSDGS) are compositionally biased toward polar residues. Phosphotyrosine is present on tyrosine 889. Positions 891–927 (QLPSCSDGSQAPARPPKPRPRRTAPEIHHRKPHGPEA) are interaction with SH3KBP1. Positions 906 to 922 (PKPRPRRTAPEIHHRKP) are enriched in basic residues. The UBA domain occupies 931–970 (NVDAKIAKLMGEGYAFEEVKRALEIAQNNVEVARSILREF).

Interacts with SH3 domain-containing proteins LCK, CRK and SORBS1. Interacts with LCP2 and ZAP70. Interacts with CBL. Interacts with SH3 domain-containing proteins VAV1, FYN, FGR, PLCG1, GRB2, CRKL, PIK3R1 and SH3KBP1/CIN85. Identified in heterotrimeric complexes with SH3KBP1/CIN85, CD2AP and ARHGEF7, where one CBLB peptide binds two copies of the other protein. Interacts with poly-ubiquitinated proteins. Dimerization is required for the binding of poly-ubiquitin, but not for the binding of mono-ubiquitin. Interacts with EGFR (phosphorylated). Interacts with IFT20. Post-translationally, phosphorylated on tyrosine and serine residues upon TCR or BCR activation, and upon various types of cell stimulation. Auto-ubiquitinated upon EGF-mediated cell activation or upon T-cell costimulation by CD28; which promotes proteasomal degradation. In terms of tissue distribution, expressed in placenta, heart, lung, kidney, spleen, ovary and testis, as well as fetal brain and liver and hematopoietic cell lines, but not in adult brain, liver, pancreas, salivary gland, or skeletal muscle. Present in lymphocytes (at protein level).

The protein resides in the cytoplasm. It catalyses the reaction S-ubiquitinyl-[E2 ubiquitin-conjugating enzyme]-L-cysteine + [acceptor protein]-L-lysine = [E2 ubiquitin-conjugating enzyme]-L-cysteine + N(6)-ubiquitinyl-[acceptor protein]-L-lysine.. It participates in protein modification; protein ubiquitination. E3 ubiquitin-protein ligase which accepts ubiquitin from specific E2 ubiquitin-conjugating enzymes, and transfers it to substrates, generally promoting their degradation by the proteasome. Negatively regulates TCR (T-cell receptor), BCR (B-cell receptor) and FCER1 (high affinity immunoglobulin epsilon receptor) signal transduction pathways. In naive T-cells, inhibits VAV1 activation upon TCR engagement and imposes a requirement for CD28 costimulation for proliferation and IL-2 production. Also acts by promoting PIK3R1/p85 ubiquitination, which impairs its recruitment to the TCR and subsequent activation. In activated T-cells, inhibits PLCG1 activation and calcium mobilization upon restimulation and promotes anergy. In B-cells, acts by ubiquitinating SYK and promoting its proteasomal degradation. Slightly promotes SRC ubiquitination. May be involved in EGFR ubiquitination and internalization. May be functionally coupled with the E2 ubiquitin-protein ligase UB2D3. In association with CBL, required for proper feedback inhibition of ciliary platelet-derived growth factor receptor-alpha (PDGFRA) signaling pathway via ubiquitination and internalization of PDGFRA. In Homo sapiens (Human), this protein is E3 ubiquitin-protein ligase CBL-B (CBLB).